The following is a 2211-amino-acid chain: Orsellinic acid synthase (2211 aa).

The N-terminal acylcarrier protein transacylase domain (SAT) stretch occupies residues 44 to 246 (TFREQVSDAI…TVAVVHSLYH (203 aa)). A Ketosynthase family 3 (KS3) domain is found at 380–805 (WDDIAIVGMA…GSNAAVIIGE (426 aa)). Active-site for beta-ketoacyl synthase activity residues include Cys549, His684, and His724. The tract at residues 910-1228 (VFIFSGQGSQ…QLTTLKKNVP (319 aa)) is malonyl-CoA:ACP transacylase (MAT) domain. Ser1006 (for acyl/malonyl transferase activity) is an active-site residue. The N-terminal hotdog fold stretch occupies residues 1309–1440 (HAIQKLSHGA…GVVKQSNMAS (132 aa)). A PKS/mFAS DH domain is found at 1309–1629 (HAIQKLSHGA…FQHVKIPLIE (321 aa)). The product template (PT) domain stretch occupies residues 1334-1573 (EFIEGHLVCG…GATTLRAPVV (240 aa)). The active-site Proton acceptor; for dehydratase activity is the His1339. The C-terminal hotdog fold stretch occupies residues 1473-1629 (VQVFSKRAMY…FQHVKIPLIE (157 aa)). Asp1537 functions as the Proton donor; for dehydratase activity in the catalytic mechanism. 2 Carrier domains span residues 1681–1755 (AAPE…EALS) and 1787–1865 (STVD…VKRP). At Ser1715 the chain carries O-(pantetheine 4'-phosphoryl)serine. Residues 1755 to 1786 (SPTPVGNDVDNDSPTPGSERGSDSAISTPASV) form a disordered region. Position 1824 is an O-(pantetheine 4'-phosphoryl)serine (Ser1824). Residues 1937–2204 (SGKSPLFLIH…AAVSAALVDA (268 aa)) are thioesterase (TE) domain.

The catalysed reaction is 3 malonyl-CoA + acetyl-CoA + 2 H(+) = orsellinate + 3 CO2 + 4 CoA. Its pathway is secondary metabolite biosynthesis. Its function is as follows. Non-reducing polyketide synthase; part of the gene cluster that mediates the biosynthesis of the bibenzoquinone oosporein, a metabolite required for fungal virulence that acts by evading host immunity to facilitate fungal multiplication in insects. The non-reducing polyketide synthase OpS1 produces orsellinic acid by condensing acetyl-CoA with 3 malonyl-CoA units. Orsellinic acid is then hydroxylated to benzenetriol by the hydroxylase OpS4. The intermediate is oxidized either nonenzymatically to 5,5'-dideoxy-oosporein or enzymatically to benzenetetrol by the oxidoreductase OpS7. The latter is further dimerized to oosporein by the catalase OpS5. OpS6 probably functions en route for protecting cells against oxidative stress by scavenging any leaked free radical form of benzenetetrol by activating the thiol group of glutathione. The chain is Orsellinic acid synthase from Beauveria bassiana (strain ARSEF 2860) (White muscardine disease fungus).